The chain runs to 609 residues: Arginine--tRNA ligase (609 aa).

Positions 114–124 (VNPNKELHVGH) match the 'HIGH' region motif.

Belongs to the class-I aminoacyl-tRNA synthetase family. As to quaternary structure, monomer.

Its subcellular location is the cytoplasm. It catalyses the reaction tRNA(Arg) + L-arginine + ATP = L-arginyl-tRNA(Arg) + AMP + diphosphate. The chain is Arginine--tRNA ligase from Deinococcus radiodurans (strain ATCC 13939 / DSM 20539 / JCM 16871 / CCUG 27074 / LMG 4051 / NBRC 15346 / NCIMB 9279 / VKM B-1422 / R1).